Consider the following 708-residue polypeptide: ATP-dependent DNA helicase Hel308 (708 aa).

Residues Gln-28 and 46–53 (TATASGKS) each bind ATP. A Helicase ATP-binding domain is found at 33–198 (RAGIFDGRSV…WLGARLVESS (166 aa)). The DEAH box motif lies at 143 to 146 (DEIH). A Helicase C-terminal domain is found at 231 to 429 (EVALAVDAVA…EPNLRAHVLG (199 aa)).

This sequence belongs to the helicase family. Hel308 subfamily. Monomer.

It carries out the reaction Couples ATP hydrolysis with the unwinding of duplex DNA by translocating in the 3'-5' direction.. It catalyses the reaction ATP + H2O = ADP + phosphate + H(+). DNA-dependent ATPase and 3'-5' DNA helicase that may be involved in repair of stalled replication forks. This chain is ATP-dependent DNA helicase Hel308, found in Pyrobaculum calidifontis (strain DSM 21063 / JCM 11548 / VA1).